The primary structure comprises 363 residues: MTVTGIIAEFNPFHNGHKYLLDYAEGIKIVAMSGNFVQRGEPAIVDKWIRAQMALENGADLVVELPFFTAVQSADYFASGAVDILSRLGIDSLTFGTEEVLDYQTIADVYSEKSEEMEAFVESLPSDLSYPQKTQKMWEKFAGVDFTGNTPNHILGLAYAKACAGKGITLNPIQRQGAGYHSLDKKVSFASATSLRLHKEDSDFVDKFMPNSKLFQTSPQVSWDNYFQLLVYQILTNPDLTSVFQVNEEIASRLKAAVREISSVEELVDKVATKRYTKARVRRILTYILVGAVDNSLPKSIHVLGFSQKGQFHLKSVKKSVDIVARIGRKPWDMLTQQADNVYQLGNPELCEQNFGRVPIRVK.

ATP is bound by residues 7-20 (IAEFNPFHNGHKYL), G96, N152, and R175.

It belongs to the TmcAL family.

The protein resides in the cytoplasm. It carries out the reaction cytidine(34) in elongator tRNA(Met) + acetate + ATP = N(4)-acetylcytidine(34) in elongator tRNA(Met) + AMP + diphosphate. Its function is as follows. Catalyzes the formation of N(4)-acetylcytidine (ac(4)C) at the wobble position of elongator tRNA(Met), using acetate and ATP as substrates. First activates an acetate ion to form acetyladenylate (Ac-AMP) and then transfers the acetyl group to tRNA to form ac(4)C34. The polypeptide is tRNA(Met) cytidine acetate ligase (Streptococcus thermophilus (strain CNRZ 1066)).